We begin with the raw amino-acid sequence, 378 residues long: Outer membrane protein (378 aa).

The signal sequence occupies residues 1–22 (MRLRTALLATTLMAAAPVAANA). The region spanning 258-378 (PPAPTPARTY…QNRRVEIILH (121 aa)) is the OmpA-like domain.

It is found in the cell outer membrane. In terms of biological role, growth enhancer. The polypeptide is Outer membrane protein (Gluconacetobacter diazotrophicus (strain ATCC 49037 / DSM 5601 / CCUG 37298 / CIP 103539 / LMG 7603 / PAl5)).